A 207-amino-acid polypeptide reads, in one-letter code: Outer-membrane lipoprotein LolB (207 aa).

The N-terminal stretch at 1–21 (MPMRKRHFYRLLPLASLLLAA) is a signal peptide. Cysteine 22 carries N-palmitoyl cysteine lipidation. A lipid anchor (S-diacylglycerol cysteine) is attached at cysteine 22.

This sequence belongs to the LolB family. Monomer.

It is found in the cell outer membrane. Its function is as follows. Plays a critical role in the incorporation of lipoproteins in the outer membrane after they are released by the LolA protein. The chain is Outer-membrane lipoprotein LolB from Yersinia pseudotuberculosis serotype IB (strain PB1/+).